A 1690-amino-acid polypeptide reads, in one-letter code: Restin homolog (1690 aa).

2 stretches are compositionally biased toward polar residues: residues 1–11 (MSDDTSASGGT) and 39–51 (NIPT…TGIP). The disordered stretch occupies residues 1 to 105 (MSDDTSASGG…ESDDNLSSIN (105 aa)). Phosphoserine is present on residues S64 and S67. The region spanning 143–185 (GDTHFAAGEWAGVVLDEPNGKNDGCVSGKRYFQCEPKRGIFSR) is the CAP-Gly 1 domain. The disordered stretch occupies residues 195-227 (AGAQTPTSPLAKSSPDRSRTVSPTASIRSSMLR). Over residues 214–226 (TVSPTASIRSSML) the composition is skewed to polar residues. A Phosphoserine modification is found at S216. Positions 260 to 302 (GETQFAPGNWCGVELDEPSGKNDGTVDDIRYFECKPKYGVFVP) constitute a CAP-Gly 2 domain. Phosphoserine occurs at positions 309, 322, and 325. T327 carries the post-translational modification Phosphothreonine. Position 328 is a phosphoserine (S328). T362 carries the phosphothreonine modification. 7 coiled-coil regions span residues 378 to 468 (QHVE…VSAT), 484 to 660 (GALQ…DMLR), 667 to 916 (EEKS…TKLK), 926 to 981 (LSSC…ELQA), 1001 to 1121 (ATGH…EAIQ), 1158 to 1549 (EADM…AQMN), and 1565 to 1600 (DIET…LETL). Positions 843 to 905 (QQAAASGEEG…GSLEEEAKKS (63 aa)) are disordered. Residues 865–885 (QLKSQAEETQSELKSTQSNLE) show a composition bias toward polar residues. Disordered stretches follow at residues 1031 to 1052 (QLQD…KEKS) and 1400 to 1419 (KLDE…NEIQ). 2 stretches are compositionally biased toward basic and acidic residues: residues 1040-1052 (TKLK…KEKS) and 1410-1419 (SQKKSHNEIQ). Positions 1635 to 1665 (TEDCPIQGSEDQDYSTPSSESNNNEKERKLP) are disordered. T1681 carries the phosphothreonine modification. S1682 is subject to Phosphoserine.

As to quaternary structure, interacts with Lva. Specifically expressed at the tip of the furrow in cellularizing blastoderms. CLIP-190 and jar are coexpressed at several times in development and in a number of tissues, including embryonic axonal neuron processes and posterior pole.

Its subcellular location is the cytoplasm. The protein localises to the cytoskeleton. It is found in the golgi apparatus. The protein resides in the microtubule organizing center. It localises to the perinuclear region. Functionally, together CLIP-190 and jar may coordinate the interaction between the actin and microtubule cytoskeleton. May link endocytic vesicles to microtubules. May play a role in formation of furrows during cellularization. The chain is Restin homolog (CLIP-190) from Drosophila melanogaster (Fruit fly).